A 1372-amino-acid polypeptide reads, in one-letter code: DNA-directed RNA polymerase subunit beta'' (1372 aa).

Zn(2+)-binding residues include C252, C321, C328, and C331.

The protein belongs to the RNA polymerase beta' chain family. RpoC2 subfamily. In terms of assembly, in plastids the minimal PEP RNA polymerase catalytic core is composed of four subunits: alpha, beta, beta', and beta''. When a (nuclear-encoded) sigma factor is associated with the core the holoenzyme is formed, which can initiate transcription. The cofactor is Zn(2+).

The protein resides in the plastid. It localises to the organellar chromatophore. The enzyme catalyses RNA(n) + a ribonucleoside 5'-triphosphate = RNA(n+1) + diphosphate. DNA-dependent RNA polymerase catalyzes the transcription of DNA into RNA using the four ribonucleoside triphosphates as substrates. The sequence is that of DNA-directed RNA polymerase subunit beta'' from Paulinella chromatophora.